Reading from the N-terminus, the 138-residue chain is Class I hydrophobin 1 (138 aa).

Positions 1 to 19 (MRFSAATVSALAMALTVAA) are cleaved as a signal peptide. Disulfide bonds link Cys45–Cys113, Cys53–Cys107, Cys54–Cys91, and Cys114–Cys131.

It belongs to the fungal hydrophobin family. Interacts with the lipid droplet coating protein Cap20.

Its subcellular location is the secreted. The protein resides in the lipid droplet. Functionally, aerial growth, conidiation, and dispersal of filamentous fungi in the environment rely upon a capability of their secreting small amphipathic proteins called hydrophobins (HPBs) with low sequence identity. Class I can self-assemble into an outermost layer of rodlet bundles on aerial cell surfaces, conferring cellular hydrophobicity that supports fungal growth, development and dispersal; whereas Class II form highly ordered films at water-air interfaces through intermolecular interactions but contribute nothing to the rodlet structure. Hydr1 is a class I hydrophobin involved in spore germination, appressorium formation, but not in the formation of the rodlet layer of conidia. Responsible for the full virulence on rubber tree leaves. The chain is Class I hydrophobin 1 from Colletotrichum siamense (Anthracnose fungus).